We begin with the raw amino-acid sequence, 925 residues long: Leucine--tRNA ligase (925 aa).

Residues 40-51 carry the 'HIGH' region motif; that stretch reads PYPSGAGLHVGH. The 'KMSKS' region motif lies at 700-704; that stretch reads KMSKS. Lysine 703 is a binding site for ATP.

This sequence belongs to the class-I aminoacyl-tRNA synthetase family.

The protein resides in the cytoplasm. The catalysed reaction is tRNA(Leu) + L-leucine + ATP = L-leucyl-tRNA(Leu) + AMP + diphosphate. The chain is Leucine--tRNA ligase from Porphyromonas gingivalis (strain ATCC 33277 / DSM 20709 / CIP 103683 / JCM 12257 / NCTC 11834 / 2561).